The sequence spans 103 residues: Somatostatin-2 (103 aa).

An N-terminal signal peptide occupies residues 1 to 21; that stretch reads MLGSAGTLLLLLLAWGARALS. Residues 22–87 constitute a propeptide that is removed on maturation; it reads QPDDNRITTG…VKFPRLSLRE (66 aa). Cys92 and Cys103 are disulfide-bonded.

Belongs to the somatostatin family.

It is found in the secreted. Functionally, somatostatin inhibits the release of somatotropin. The sequence is that of Somatostatin-2 (sst2) from Pelophylax ridibundus (Marsh frog).